The chain runs to 259 residues: 14-3-3-like protein GF14 omega (259 aa).

Phosphoserine is present on residues Ser67, Ser109, and Ser190. The residue at position 211 (Thr211) is a Phosphothreonine.

This sequence belongs to the 14-3-3 family. In terms of assembly, interacts with CINV1.

The protein resides in the nucleus. Its subcellular location is the cytoplasm. Its function is as follows. Is associated with a DNA binding complex that binds to the G box, a well-characterized cis-acting DNA regulatory element found in plant genes. This is 14-3-3-like protein GF14 omega (GRF2) from Arabidopsis thaliana (Mouse-ear cress).